A 596-amino-acid polypeptide reads, in one-letter code: Probable protein S-acyltransferase 22 (596 aa).

A run of 2 helical transmembrane segments spans residues 15–35 (VVAV…FAPF) and 44–64 (IAMG…IWCA). A disordered region spans residues 102 to 125 (TGGAKSHDGTCVEDTENGSNKKLE). Positions 163 to 213 (FYCSLCEVEVFKYSKHCRVCDKCVDRFDHHCRWLNNCIGKRNYRKFFSLMV) constitute a DHHC domain. The active-site S-palmitoyl cysteine intermediate is Cys193. 2 consecutive transmembrane segments (helical) span residues 215-235 (AIFL…LCLL) and 254-274 (LIPF…ATLP). Disordered regions lie at residues 433 to 455 (SGRR…RRQS), 498 to 523 (QTSR…DSHD), and 549 to 596 (MGQQ…HKSR). A compositionally biased stretch (polar residues) spans 498 to 518 (QTSRAMSGSGNVMVTSSPESS). Over residues 549-571 (MGQQRGQQQQQQLSMMMMPLSRS) the composition is skewed to low complexity.

This sequence belongs to the DHHC palmitoyltransferase family.

It is found in the cell membrane. It localises to the cytoplasmic vesicle membrane. It catalyses the reaction L-cysteinyl-[protein] + hexadecanoyl-CoA = S-hexadecanoyl-L-cysteinyl-[protein] + CoA. In terms of biological role, palmitoyl acyltransferase. The sequence is that of Probable protein S-acyltransferase 22 (PAT22) from Arabidopsis thaliana (Mouse-ear cress).